The following is a 282-amino-acid chain: tRNA pseudouridine synthase A (282 aa).

The Nucleophile role is filled by Asp-51. Tyr-109 lines the substrate pocket.

Belongs to the tRNA pseudouridine synthase TruA family. Homodimer.

The enzyme catalyses uridine(38/39/40) in tRNA = pseudouridine(38/39/40) in tRNA. Its function is as follows. Formation of pseudouridine at positions 38, 39 and 40 in the anticodon stem and loop of transfer RNAs. This is tRNA pseudouridine synthase A from Delftia acidovorans (strain DSM 14801 / SPH-1).